The sequence spans 360 residues: DNA replication and repair protein RecF (360 aa).

G30–T37 lines the ATP pocket.

It belongs to the RecF family.

It is found in the cytoplasm. The RecF protein is involved in DNA metabolism; it is required for DNA replication and normal SOS inducibility. RecF binds preferentially to single-stranded, linear DNA. It also seems to bind ATP. This Shewanella oneidensis (strain ATCC 700550 / JCM 31522 / CIP 106686 / LMG 19005 / NCIMB 14063 / MR-1) protein is DNA replication and repair protein RecF.